Consider the following 424-residue polypeptide: MSNTQPFFSQPLAERDAPVRSAILKELERQQSQVELIASENIVSRAVLEAQGSVLTNKYAEGYPGKRYYGGCEFADEVEALAIDRVKQIFNAGYANVQPHSGAQANGSVMLALAKPGDTVLGMSLDAGGHLTHGAKPALSGKWFNAVQYGVNRDTMLIDYDQVEALAHEHKPNLIIAGFSAYPRALDFARFRAIADSVGAKLMVDMAHIAGVIAAGRHANPVEHAHVVTSTTHKTLRGPRGGFVLTNDEDIAKKINSAVFPGLQGGPLMHVIAGKAVAFGEVLQADFKTYIDNVLANAQALGEVLKAGGVDLVTGGTDNHLLLVDLRPKGLKGAPVEQALERAGITCNKNGIPFDTEKPTVTSGIRLGTPAGTTRGFGVAEFREVGRLILEVFDALRANPEGDHATEQRVRREIFALCERFPIY.

(6S)-5,6,7,8-tetrahydrofolate contacts are provided by residues Leu125 and 129-131 (GHL). Lys234 carries the post-translational modification N6-(pyridoxal phosphate)lysine.

The protein belongs to the SHMT family. Homodimer. The cofactor is pyridoxal 5'-phosphate.

It is found in the cytoplasm. It catalyses the reaction (6R)-5,10-methylene-5,6,7,8-tetrahydrofolate + glycine + H2O = (6S)-5,6,7,8-tetrahydrofolate + L-serine. The protein operates within one-carbon metabolism; tetrahydrofolate interconversion. It participates in amino-acid biosynthesis; glycine biosynthesis; glycine from L-serine: step 1/1. In terms of biological role, catalyzes the reversible interconversion of serine and glycine with tetrahydrofolate (THF) serving as the one-carbon carrier. This reaction serves as the major source of one-carbon groups required for the biosynthesis of purines, thymidylate, methionine, and other important biomolecules. Also exhibits THF-independent aldolase activity toward beta-hydroxyamino acids, producing glycine and aldehydes, via a retro-aldol mechanism. This is Serine hydroxymethyltransferase 1 from Burkholderia lata (strain ATCC 17760 / DSM 23089 / LMG 22485 / NCIMB 9086 / R18194 / 383).